Consider the following 301-residue polypeptide: Acetaldehyde dehydrogenase (301 aa).

The active-site Acyl-thioester intermediate is the cysteine 130. Residues 161–169 and asparagine 272 contribute to the NAD(+) site; that span reads SVGPGTRRN.

Belongs to the acetaldehyde dehydrogenase family.

The enzyme catalyses acetaldehyde + NAD(+) + CoA = acetyl-CoA + NADH + H(+). The sequence is that of Acetaldehyde dehydrogenase (mhpF) from Cupriavidus taiwanensis (strain DSM 17343 / BCRC 17206 / CCUG 44338 / CIP 107171 / LMG 19424 / R1) (Ralstonia taiwanensis (strain LMG 19424)).